We begin with the raw amino-acid sequence, 264 residues long: MRKWLYRLFIELTNHSLSSKLLASFAKSRLSGLLISSYAKIYHINQDEMEKSLKNYKTLQQLFVRRLKAGVRPVDADEHTVVSPVDAVIEDMGTIRENCEMIVKGKPYSIAEMLGSVEAAQPYVNGFFFILYLSPSHYHRIHSPISGVIEKQWALGRKSYPVNRLGLKYGRRPLEKNYRLITEVTAGGKRLAIVKIGAMFVNSIELTHEGEQLVKGEEMAYFSFGSTVVLLFERGSFAPDPRIVAPMPIKVGERLGYWCEAHER.

Residues aspartate 86, histidine 142, and serine 226 each act as charge relay system; for autoendoproteolytic cleavage activity in the active site. Serine 226 (schiff-base intermediate with substrate; via pyruvic acid; for decarboxylase activity) is an active-site residue. Pyruvic acid (Ser); by autocatalysis is present on serine 226.

The protein belongs to the phosphatidylserine decarboxylase family. PSD-B subfamily. Prokaryotic type I sub-subfamily. As to quaternary structure, heterodimer of a large membrane-associated beta subunit and a small pyruvoyl-containing alpha subunit. Pyruvate serves as cofactor. Post-translationally, is synthesized initially as an inactive proenzyme. Formation of the active enzyme involves a self-maturation process in which the active site pyruvoyl group is generated from an internal serine residue via an autocatalytic post-translational modification. Two non-identical subunits are generated from the proenzyme in this reaction, and the pyruvate is formed at the N-terminus of the alpha chain, which is derived from the carboxyl end of the proenzyme. The autoendoproteolytic cleavage occurs by a canonical serine protease mechanism, in which the side chain hydroxyl group of the serine supplies its oxygen atom to form the C-terminus of the beta chain, while the remainder of the serine residue undergoes an oxidative deamination to produce ammonia and the pyruvoyl prosthetic group on the alpha chain. During this reaction, the Ser that is part of the protease active site of the proenzyme becomes the pyruvoyl prosthetic group, which constitutes an essential element of the active site of the mature decarboxylase.

Its subcellular location is the cell membrane. It catalyses the reaction a 1,2-diacyl-sn-glycero-3-phospho-L-serine + H(+) = a 1,2-diacyl-sn-glycero-3-phosphoethanolamine + CO2. It participates in phospholipid metabolism; phosphatidylethanolamine biosynthesis; phosphatidylethanolamine from CDP-diacylglycerol: step 2/2. Functionally, catalyzes the formation of phosphatidylethanolamine (PtdEtn) from phosphatidylserine (PtdSer). The polypeptide is Phosphatidylserine decarboxylase proenzyme (Geobacillus kaustophilus (strain HTA426)).